Reading from the N-terminus, the 135-residue chain is Ribosome-binding factor A (135 aa).

The protein belongs to the RbfA family. As to quaternary structure, monomer. Binds 30S ribosomal subunits, but not 50S ribosomal subunits or 70S ribosomes.

It localises to the cytoplasm. Its function is as follows. One of several proteins that assist in the late maturation steps of the functional core of the 30S ribosomal subunit. Associates with free 30S ribosomal subunits (but not with 30S subunits that are part of 70S ribosomes or polysomes). Required for efficient processing of 16S rRNA. May interact with the 5'-terminal helix region of 16S rRNA. The chain is Ribosome-binding factor A from Bartonella henselae (strain ATCC 49882 / DSM 28221 / CCUG 30454 / Houston 1) (Rochalimaea henselae).